The primary structure comprises 111 residues: Fluoride-specific ion channel FluC 3 (111 aa).

The next 3 helical transmembrane spans lie at 26–46 (IPAG…LLTF), 53–73 (VVYL…TFAY), and 91–111 (IFLN…ALML). Na(+) contacts are provided by G63 and T66.

This sequence belongs to the fluoride channel Fluc/FEX (TC 1.A.43) family.

The protein localises to the cell membrane. The catalysed reaction is fluoride(in) = fluoride(out). Na(+) is not transported, but it plays an essential structural role and its presence is essential for fluoride channel function. Functionally, fluoride-specific ion channel. Important for reducing fluoride concentration in the cell, thus reducing its toxicity. The polypeptide is Fluoride-specific ion channel FluC 3 (Methanosarcina acetivorans (strain ATCC 35395 / DSM 2834 / JCM 12185 / C2A)).